The following is a 416-amino-acid chain: Peptide chain release factor subunit 1 (416 aa).

Belongs to the eukaryotic release factor 1 family. As to quaternary structure, heterodimer of two subunits, one of which binds GTP.

The protein localises to the cytoplasm. Directs the termination of nascent peptide synthesis (translation) in response to the termination codons UAA, UAG and UGA. The polypeptide is Peptide chain release factor subunit 1 (Haloquadratum walsbyi (strain DSM 16790 / HBSQ001)).